Reading from the N-terminus, the 347-residue chain is D-alanine--D-alanine ligase (347 aa).

The ATP-grasp domain occupies 131–333; that stretch reads KRVLESAGIA…YPKLIERLVD (203 aa). Position 161–216 (161–216) interacts with ATP; sequence EEKLAYPVFTKPSNMGSSVGISKSENQEELRQALKLAFRYDSRVLVEQGVNAREIE. Mg(2+)-binding residues include aspartate 287, glutamate 300, and asparagine 302.

This sequence belongs to the D-alanine--D-alanine ligase family. It depends on Mg(2+) as a cofactor. Mn(2+) is required as a cofactor.

It is found in the cytoplasm. The enzyme catalyses 2 D-alanine + ATP = D-alanyl-D-alanine + ADP + phosphate + H(+). Its pathway is cell wall biogenesis; peptidoglycan biosynthesis. Functionally, cell wall formation. This chain is D-alanine--D-alanine ligase, found in Streptococcus pneumoniae serotype 4 (strain ATCC BAA-334 / TIGR4).